Here is a 520-residue protein sequence, read N- to C-terminus: Peptide chain release factor 3 (520 aa).

The region spanning 8 to 277 (ESRKTFAIIS…HAPMPNARQT (270 aa)) is the tr-type G domain. GTP-binding positions include 17 to 24 (SHPDAGKT), 85 to 89 (DTPGH), and 139 to 142 (NKLD).

Belongs to the TRAFAC class translation factor GTPase superfamily. Classic translation factor GTPase family. PrfC subfamily.

It localises to the cytoplasm. Its function is as follows. Increases the formation of ribosomal termination complexes and stimulates activities of RF-1 and RF-2. It binds guanine nucleotides and has strong preference for UGA stop codons. It may interact directly with the ribosome. The stimulation of RF-1 and RF-2 is significantly reduced by GTP and GDP, but not by GMP. This is Peptide chain release factor 3 from Staphylococcus epidermidis (strain ATCC 35984 / DSM 28319 / BCRC 17069 / CCUG 31568 / BM 3577 / RP62A).